Reading from the N-terminus, the 162-residue chain is Interleukin-15 (162 aa).

Positions 1 to 29 (MRISKPHLRITSIQCYVCLLLNTHFLTEA) are cleaved as a signal peptide. Residues 30–48 (GIRVFILGCISAGIPKTEA) constitute a propeptide that is removed on maturation. Cystine bridges form between cysteine 83–cysteine 133 and cysteine 90–cysteine 136. Residues asparagine 119, asparagine 127, and asparagine 143 are each glycosylated (N-linked (GlcNAc...) asparagine).

The protein belongs to the IL-15/IL-21 family.

Its subcellular location is the secreted. Functionally, cytokine that plays a major role in the development of inflammatory and protective immune responses to microbial invaders and parasites by modulating immune cells of both the innate and adaptive immune systems. Stimulates the proliferation of natural killer cells, T-cells and B-cells and promotes the secretion of several cytokines. In monocytes, induces the production of IL8 and monocyte chemotactic protein 1/CCL2, two chemokines that attract neutrophils and monocytes respectively to sites of infection. Unlike most cytokines, which are secreted in soluble form, IL15 is expressed in association with its high affinity IL15RA on the surface of IL15-producing cells and delivers signals to target cells that express IL2RB and IL2RG receptor subunits. Binding to its receptor triggers the phosphorylation of JAK1 and JAK3 and the recruitment and subsequent phosphorylation of signal transducer and activator of transcription-3/STAT3 and STAT5. In mast cells, induces the rapid tyrosine phosphorylation of STAT6 and thereby controls mast cell survival and release of cytokines such as IL4. The chain is Interleukin-15 (IL15) from Marmota monax (Woodchuck).